Here is a 288-residue protein sequence, read N- to C-terminus: Nucleotide-binding protein Veis_1053 (288 aa).

Residue 10-17 (GMSGSGKS) participates in ATP binding. Residue 59-62 (DVRS) participates in GTP binding.

This sequence belongs to the RapZ-like family.

In terms of biological role, displays ATPase and GTPase activities. The sequence is that of Nucleotide-binding protein Veis_1053 from Verminephrobacter eiseniae (strain EF01-2).